A 506-amino-acid chain; its full sequence is Proline--tRNA ligase (506 aa).

This sequence belongs to the class-II aminoacyl-tRNA synthetase family. ProS type 3 subfamily. Homodimer.

The protein localises to the cytoplasm. The catalysed reaction is tRNA(Pro) + L-proline + ATP = L-prolyl-tRNA(Pro) + AMP + diphosphate. Its function is as follows. Catalyzes the attachment of proline to tRNA(Pro) in a two-step reaction: proline is first activated by ATP to form Pro-AMP and then transferred to the acceptor end of tRNA(Pro). This Akkermansia muciniphila (strain ATCC BAA-835 / DSM 22959 / JCM 33894 / BCRC 81048 / CCUG 64013 / CIP 107961 / Muc) protein is Proline--tRNA ligase.